Here is a 393-residue protein sequence, read N- to C-terminus: Zinc finger CCCH domain-containing protein 2 (393 aa).

The interval 1–71 (MDVVCTEHQM…NRENKEYCYD (71 aa)) is disordered. Over residues 20-37 (RKLLLSSKSFPSDSSSPR) the composition is skewed to low complexity. Basic and acidic residues predominate over residues 60–69 (DNNRENKEYC). 2 consecutive C3H1-type zinc fingers follow at residues 122-150 (QYSG…HGVF) and 159-181 (YRTE…AHSP).

As to quaternary structure, interacts with MARD1/FLZ9 and RD21A. In terms of tissue distribution, specifically expressed in seeds.

The protein localises to the nucleus. Probable transcription repressor that functions as a negative regulator of phytochrome-mediated promotion of seed germination. Inhibits seed germination by regulating the expression of gibberellic acid (GA) and abscisic acid (ABA) metabolic genes. Does not regulate the expression of the DELLA genes RGA and RGA1. Activated by PIL5, a phytochrome-interacting basic helix-loop-helix transcription factor. Represses directly JMJ20 and JMJ22 expression in the absence of red light (R) and in far-red (FR) conditions. This is Zinc finger CCCH domain-containing protein 2 from Arabidopsis thaliana (Mouse-ear cress).